Here is a 439-residue protein sequence, read N- to C-terminus: Xylose isomerase (439 aa).

Residues H101 and D104 contribute to the active site. Positions 232, 268, 271, 296, 307, 309, and 339 each coordinate Mg(2+).

Belongs to the xylose isomerase family. Homotetramer. Mg(2+) serves as cofactor.

Its subcellular location is the cytoplasm. It carries out the reaction alpha-D-xylose = alpha-D-xylulofuranose. The sequence is that of Xylose isomerase from Photorhabdus laumondii subsp. laumondii (strain DSM 15139 / CIP 105565 / TT01) (Photorhabdus luminescens subsp. laumondii).